The chain runs to 37 residues: MKVRASVKKICDKCKVIRRHGVVRVICENAKHKQRQG.

This sequence belongs to the bacterial ribosomal protein bL36 family.

The sequence is that of Large ribosomal subunit protein bL36 from Koribacter versatilis (strain Ellin345).